Here is a 313-residue protein sequence, read N- to C-terminus: Probable F-box protein At3g44130 (313 aa).

In terms of domain architecture, F-box spans 1-46 (MASGNLPWELEEEILCRLPLGSLVRLRSVCKHWNDFFNDKWFIKKS).

The protein is Probable F-box protein At3g44130 of Arabidopsis thaliana (Mouse-ear cress).